The following is an 853-amino-acid chain: Auxin response factor 23 (853 aa).

A disordered region spans residues 121 to 141 (KQQEDNGSTEEEVPSAPAAGH). Residues 149–251 (FCKTLTASDT…ELRVGVRRAM (103 aa)) constitute a DNA-binding region (TF-B3). 2 disordered regions span residues 422–471 (ESEP…NNTP) and 647–723 (PAKS…QGVS). Residues 425-455 (PNGTQRTFQTQENATPKSGFGNSSELESAQK) are compositionally biased toward polar residues. Over residues 672–686 (EWRRPDVTEVEKCSD) the composition is skewed to basic and acidic residues. Residues 706–723 (PSSQQASRNMSCKSQGVS) show a composition bias toward polar residues. Residues 725 to 809 (RSCKKVHKQG…HKIFIYTREE (85 aa)) enclose the PB1 domain. Positions 815–853 (PGTLNSRSEDSHANSMERGSVGREMRGCLSTSSLNSENC) are disordered. A compositionally biased stretch (polar residues) spans 843–853 (LSTSSLNSENC).

This sequence belongs to the ARF family. In terms of assembly, homodimers and heterodimers.

It is found in the nucleus. Auxin response factors (ARFs) are transcriptional factors that bind specifically to the DNA sequence 5'-TGTCTC-3' found in the auxin-responsive promoter elements (AuxREs). This chain is Auxin response factor 23 (ARF23), found in Oryza sativa subsp. indica (Rice).